Reading from the N-terminus, the 404-residue chain is Tryptophan synthase beta chain (404 aa).

Lysine 90 is modified (N6-(pyridoxal phosphate)lysine).

It belongs to the TrpB family. Tetramer of two alpha and two beta chains. Pyridoxal 5'-phosphate serves as cofactor.

It carries out the reaction (1S,2R)-1-C-(indol-3-yl)glycerol 3-phosphate + L-serine = D-glyceraldehyde 3-phosphate + L-tryptophan + H2O. Its pathway is amino-acid biosynthesis; L-tryptophan biosynthesis; L-tryptophan from chorismate: step 5/5. In terms of biological role, the beta subunit is responsible for the synthesis of L-tryptophan from indole and L-serine. The chain is Tryptophan synthase beta chain (trpB) from Geobacillus stearothermophilus (Bacillus stearothermophilus).